A 196-amino-acid chain; its full sequence is Probable malonic semialdehyde reductase RutE (196 aa).

Belongs to the nitroreductase family. HadB/RutE subfamily. FMN is required as a cofactor.

The catalysed reaction is 3-hydroxypropanoate + NADP(+) = 3-oxopropanoate + NADPH + H(+). May reduce toxic product malonic semialdehyde to 3-hydroxypropionic acid, which is excreted. This Escherichia coli (strain K12 / MC4100 / BW2952) protein is Probable malonic semialdehyde reductase RutE.